A 729-amino-acid chain; its full sequence is DNA topoisomerase 3 (729 aa).

The Toprim domain occupies 3–136 (KSVVIAEKPS…IKRLWISSVT (134 aa)). Mg(2+) contacts are provided by Glu9 and Asp105. A Topo IA-type catalytic domain is found at 153–594 (YDNLYASAVA…EMKNYTKEIV (442 aa)). The tract at residues 187–192 (NCGRVQ) is interaction with DNA. Tyr310 (O-(5'-phospho-DNA)-tyrosine intermediate) is an active-site residue. Positions 686–713 (ERRKKESGNKADKRDVQKYMKQQKKEEE) are enriched in basic and acidic residues. The disordered stretch occupies residues 686–718 (ERRKKESGNKADKRDVQKYMKQQKKEEEPLNNP).

It belongs to the type IA topoisomerase family. Mg(2+) serves as cofactor.

The enzyme catalyses ATP-independent breakage of single-stranded DNA, followed by passage and rejoining.. Its function is as follows. Releases the supercoiling and torsional tension of DNA, which is introduced during the DNA replication and transcription, by transiently cleaving and rejoining one strand of the DNA duplex. Introduces a single-strand break via transesterification at a target site in duplex DNA. The scissile phosphodiester is attacked by the catalytic tyrosine of the enzyme, resulting in the formation of a DNA-(5'-phosphotyrosyl)-enzyme intermediate and the expulsion of a 3'-OH DNA strand. The free DNA strand then undergoes passage around the unbroken strand, thus removing DNA supercoils. Finally, in the religation step, the DNA 3'-OH attacks the covalent intermediate to expel the active-site tyrosine and restore the DNA phosphodiester backbone. The protein is DNA topoisomerase 3 of Bacillus cereus (strain ZK / E33L).